Consider the following 484-residue polypeptide: UDP-glucose:undecaprenyl-phosphate glucose-1-phosphate transferase (484 aa).

5 helical membrane passes run 37-57 (MVVA…VPAA), 59-79 (YRVA…LFPL), 93-113 (VVLG…ALIV), 122-142 (GWVG…RTLL), and 299-319 (ILAV…AVGV).

The protein belongs to the bacterial sugar transferase family.

It localises to the cell inner membrane. It carries out the reaction di-trans,octa-cis-undecaprenyl phosphate + UDP-alpha-D-glucose = alpha-D-glucosyl di-trans,octa-cis-undecaprenyl diphosphate + UMP. It functions in the pathway glycan biosynthesis; xanthan biosynthesis. Functionally, is the initiating enzyme for the synthesis of the exopolysaccharide xanthan. Catalyzes the transfer of the glucose-1-phosphate moiety from UDP-Glc onto the carrier lipid undecaprenyl phosphate (C55-P), forming a phosphoanhydride bond yielding to glucosyl-pyrophosphoryl-undecaprenol (Glc-PP-C55). The polypeptide is UDP-glucose:undecaprenyl-phosphate glucose-1-phosphate transferase (gumD) (Xanthomonas campestris pv. campestris).